A 395-amino-acid polypeptide reads, in one-letter code: NAD(P)H-quinone oxidoreductase subunit H, chloroplastic (395 aa).

The protein belongs to the complex I 49 kDa subunit family. As to quaternary structure, NDH is composed of at least 16 different subunits, 5 of which are encoded in the nucleus.

It is found in the plastid. It localises to the chloroplast thylakoid membrane. The catalysed reaction is a plastoquinone + NADH + (n+1) H(+)(in) = a plastoquinol + NAD(+) + n H(+)(out). The enzyme catalyses a plastoquinone + NADPH + (n+1) H(+)(in) = a plastoquinol + NADP(+) + n H(+)(out). NDH shuttles electrons from NAD(P)H:plastoquinone, via FMN and iron-sulfur (Fe-S) centers, to quinones in the photosynthetic chain and possibly in a chloroplast respiratory chain. The immediate electron acceptor for the enzyme in this species is believed to be plastoquinone. Couples the redox reaction to proton translocation, and thus conserves the redox energy in a proton gradient. The polypeptide is NAD(P)H-quinone oxidoreductase subunit H, chloroplastic (Citrus sinensis (Sweet orange)).